The primary structure comprises 134 residues: Syncollin (134 aa).

Residues 1 to 21 form the signal peptide; it reads MSPLCLLLLALALVAVPGARG.

As to quaternary structure, monomer and homooligomer; most probably hexameric. Interacts with GP2. According to PubMed:10753942 interaction with syntaxins shown in PubMed:9244306 is physiologically questionable. In terms of processing, contains intrachain disulfide bonds. As to expression, specifically expressed in pancreas and also detected in secretory granules of parotid gland (at protein level). Expressed in pancreas, spleen, small intestine, lung and neutrophilic granulocytes (at protein level). Expressed by epithelial cells in duodenum and colon.

It localises to the zymogen granule membrane. The protein resides in the zymogen granule lumen. In terms of biological role, functions in exocytosis in pancreatic acinar cells regulating the fusion of zymogen granules with each other. May have a pore-forming activity on membranes and regulate exocytosis in other exocrine tissues. This is Syncollin (Sycn) from Rattus norvegicus (Rat).